Consider the following 407-residue polypeptide: Histone acetyltransferase mst2 (407 aa).

In terms of domain architecture, MYST-type HAT spans 98–372; sequence PQPTSIRYLY…VNPKLLRWTP (275 aa). Residues 131–156 form a C2HC MYST-type zinc finger; that stretch reads LYICESCLKYMNSDHVLQRHKMKCSW. Residue K198 is modified to N6-acetyllysine; by autocatalysis. Residues 241–243, T243, and 248–254 each bind acetyl-CoA; these read ILT and QRRGYGV. The active-site Proton donor/acceptor is the E274. Positions 278 and 287 each coordinate acetyl-CoA.

Belongs to the MYST (SAS/MOZ) family. As to quaternary structure, component of the mst2 complex composed of at least eaf6, mst2, nto1, pdp3, ptf1, ptf2 and tfg3. Autoacetylation at Lys-198 is required for proper function.

The protein localises to the cytoplasm. It localises to the nucleus. The catalysed reaction is L-lysyl-[protein] + acetyl-CoA = N(6)-acetyl-L-lysyl-[protein] + CoA + H(+). In terms of biological role, component of the mst2 complex which is a highly specific H3 lysine 14 (H3K14) acetyltransferase that functions together with gcn5 to regulate global levels of H3K14 acetylation (H3K14ac), critical for DNA damage checkpoint activation. Negatively regulates telomere silencing. Telomere silencing is increased due to histone hypoacetylation and/or an increase in the ratio of methylated histones to acetylated histones. Telomeric histone acetylation contributes to normal meiotic progression. The chain is Histone acetyltransferase mst2 (mst2) from Schizosaccharomyces pombe (strain 972 / ATCC 24843) (Fission yeast).